Consider the following 732-residue polypeptide: Catalase-peroxidase (732 aa).

Positions 1–23 (MSEQSKCPVTGRTAGHPVAGGGM) are disordered. The segment at residues 97 to 220 (WHSAGTYRTS…LAAVQMGLIY (124 aa)) is a cross-link (tryptophyl-tyrosyl-methioninium (Trp-Tyr) (with M-246)). Residue His98 is the Proton acceptor of the active site. Residues 220 to 246 (YVNPEGPDGNPDPVAAGRDIRETFARM) constitute a cross-link (tryptophyl-tyrosyl-methioninium (Tyr-Met) (with W-97)). His261 contacts heme b.

The protein belongs to the peroxidase family. Peroxidase/catalase subfamily. Homodimer or homotetramer. Heme b serves as cofactor. Post-translationally, formation of the three residue Trp-Tyr-Met cross-link is important for the catalase, but not the peroxidase activity of the enzyme.

The catalysed reaction is H2O2 + AH2 = A + 2 H2O. It carries out the reaction 2 H2O2 = O2 + 2 H2O. Its function is as follows. Bifunctional enzyme with both catalase and broad-spectrum peroxidase activity. This Chlorobium limicola (strain DSM 245 / NBRC 103803 / 6330) protein is Catalase-peroxidase.